Consider the following 116-residue polypeptide: Vesicle-associated membrane protein 5 (116 aa).

At 1-72 (MAGIELERCQ…CWENIRYRIC (72 aa)) the chain is on the cytoplasmic side. Residues 5-65 (ELERCQQQAN…QNLAQKKCWE (61 aa)) enclose the v-SNARE coiled-coil homology domain. Residues serine 41, serine 48, and serine 49 each carry the phosphoserine modification. Residues 73–93 (VGLVVVGVLLIILIVLLVVFL) form a helical; Anchor for type IV membrane protein membrane-spanning segment. The Vesicular segment spans residues 94-116 (PQSSDSSSAPRTQDAGIASGPGN). The segment at 96–116 (SSDSSSAPRTQDAGIASGPGN) is disordered.

This sequence belongs to the synaptobrevin family. Post-translationally, (Microbial infection) Targeted and hydrolyzed by C.botulinum neurotoxin type X (BoNT/X) which hydrolyzes the 40-Arg-|-Ser-41 bond and probably inhibits neurotransmitter release. It remains unknown whether BoNT/X is ever produced, or what organisms it targets.

It is found in the cell membrane. Its subcellular location is the endomembrane system. It localises to the golgi apparatus. The protein localises to the trans-Golgi network membrane. Its function is as follows. May participate in trafficking events that are associated with myogenesis, such as myoblast fusion and/or GLUT4 trafficking. The protein is Vesicle-associated membrane protein 5 (VAMP5) of Homo sapiens (Human).